The chain runs to 352 residues: MAKIAVYGAGSWGTALAVSMGKAGHEVALVGRNLSEMDLMEQRRENRPYLPGVVLPPTVRPTGDAGVLEEAEMLVLSVPSHSVRETAQKIRAYLQPGTIVVNTAKGLEEGSHKRLSQVLTEELPHHPIVVLSGPSHAEEVGKDMPTTVVVASQNSQAAEAVQDMLMTPKFRVYTNPDTIGVELGGAFKNIIALCAGFADGLGFGDNTKAALMTRGIAEITRLGAAMGGNPLTFAGLAGVGDLIVTCTSRHSRNHRAGVALGEGKPLEQVLKEVGMVVEGVRTTRVAYELSRQYEISMPITEQAYQVLFQGADPRAAVSALMMRGKKHEIEEVALIAMEQGSYQENGPDDHGE.

Serine 11, tryptophan 12, arginine 32, and lysine 105 together coordinate NADPH. Sn-glycerol 3-phosphate contacts are provided by lysine 105, glycine 133, and serine 135. Alanine 137 lines the NADPH pocket. Sn-glycerol 3-phosphate contacts are provided by lysine 188, aspartate 241, serine 251, arginine 252, and asparagine 253. The Proton acceptor role is filled by lysine 188. Arginine 252 contacts NADPH. NADPH is bound by residues valine 276 and glutamate 278.

Belongs to the NAD-dependent glycerol-3-phosphate dehydrogenase family.

The protein localises to the cytoplasm. The catalysed reaction is sn-glycerol 3-phosphate + NAD(+) = dihydroxyacetone phosphate + NADH + H(+). It carries out the reaction sn-glycerol 3-phosphate + NADP(+) = dihydroxyacetone phosphate + NADPH + H(+). It participates in membrane lipid metabolism; glycerophospholipid metabolism. In terms of biological role, catalyzes the reduction of the glycolytic intermediate dihydroxyacetone phosphate (DHAP) to sn-glycerol 3-phosphate (G3P), the key precursor for phospholipid synthesis. In Desulfitobacterium hafniense (strain Y51), this protein is Glycerol-3-phosphate dehydrogenase [NAD(P)+].